Consider the following 911-residue polypeptide: Nitrate reductase [NADH], clone PBNBR1412 (911 aa).

The tract at residues 53 to 72 (NDAVDDSYDSSDDEDESHNR) is disordered. Over residues 56–68 (VDDSYDSSDDEDE) the composition is skewed to acidic residues. Cysteine 191 serves as a coordination point for Mo-molybdopterin. Residues 539–614 (AKMYSMSEVR…LEDYRIGELI (76 aa)) enclose the Cytochrome b5 heme-binding domain. Positions 574 and 597 each coordinate heme. Positions 654–766 (REKVPVTLIE…KGPLGHIEYL (113 aa)) constitute an FAD-binding FR-type domain. FAD-binding positions include 706 to 709 (RAYT), 723 to 727 (VVKVY), phenylalanine 728, phenylalanine 735, 740 to 742 (LMS), and threonine 793.

The protein belongs to the nitrate reductase family. In terms of assembly, homodimer. The cofactor is FAD. Heme is required as a cofactor. Mo-molybdopterin serves as cofactor.

The catalysed reaction is nitrite + NAD(+) + H2O = nitrate + NADH + H(+). Nitrate reductase is a key enzyme involved in the first step of nitrate assimilation in plants, fungi and bacteria. This chain is Nitrate reductase [NADH], clone PBNBR1412 (NIA2), found in Brassica napus (Rape).